We begin with the raw amino-acid sequence, 502 residues long: Inosine-5'-monophosphate dehydrogenase 2 (502 aa).

N-acetylserine is present on Ser-2. The region spanning 166-225 is the CBS domain; that stretch reads MKSCENKDYYVPWDIDLDKIEAVLEDKQKGFVVLEKEGETVNVVTKDDVERVKGYPKLGS. NAD(+)-binding positions include 264 to 266 and 314 to 316; these read DSS and GMG. Gly-316 and Gly-318 together coordinate K(+). Ser-319 provides a ligand contact to IMP. Residue Cys-321 coordinates K(+). Residue Cys-321 is the Thioimidate intermediate of the active site. Residues 354 to 356, 377 to 378, and 401 to 405 contribute to the IMP site; these read DGG, GS, and YRGMG. The active-site Proton acceptor is the Arg-417. Gln-429 provides a ligand contact to IMP. K(+) contacts are provided by Glu-488, Gly-489, and Gly-490.

It belongs to the IMPDH/GMPR family. As to quaternary structure, homotetramer. K(+) serves as cofactor.

It is found in the cytoplasm. The catalysed reaction is IMP + NAD(+) + H2O = XMP + NADH + H(+). It participates in purine metabolism; XMP biosynthesis via de novo pathway; XMP from IMP: step 1/1. With respect to regulation, mycophenolic acid (MPA) is a non-competitive inhibitor that prevents formation of the closed enzyme conformation by binding to the same site as the amobile flap. In contrast, mizoribine monophosphate (MZP) is a competitive inhibitor that induces the closed conformation. MPA is a potent inhibitor of mammalian IMPDHs but a poor inhibitor of the bacterial enzymes. MZP is a more potent inhibitor of bacterial IMPDH. Catalyzes the conversion of inosine 5'-phosphate (IMP) to xanthosine 5'-phosphate (XMP), the first committed and rate-limiting step in the de novo synthesis of guanine nucleotides, and therefore plays an important role in the regulation of cell growth. The sequence is that of Inosine-5'-monophosphate dehydrogenase 2 from Arabidopsis thaliana (Mouse-ear cress).